The chain runs to 226 residues: 7-cyano-7-deazaguanine synthase (226 aa).

10 to 20 (FSGGQDSTTLA) is a binding site for ATP. Zn(2+) is bound by residues Cys190, Cys205, Cys208, and Cys211.

This sequence belongs to the QueC family. It depends on Zn(2+) as a cofactor.

The catalysed reaction is 7-carboxy-7-deazaguanine + NH4(+) + ATP = 7-cyano-7-deazaguanine + ADP + phosphate + H2O + H(+). The protein operates within purine metabolism; 7-cyano-7-deazaguanine biosynthesis. In terms of biological role, catalyzes the ATP-dependent conversion of 7-carboxy-7-deazaguanine (CDG) to 7-cyano-7-deazaguanine (preQ(0)). This Helicobacter pylori (strain ATCC 700392 / 26695) (Campylobacter pylori) protein is 7-cyano-7-deazaguanine synthase.